The following is a 75-amino-acid chain: Conotoxin VnMSGL-0111 (75 aa).

Positions 1-20 (MSGLEIMVLTLLLLVSMATS) are cleaved as a signal peptide. Positions 21–44 (HQDGGEKQATQRDAINVRRRSITR) are excised as a propeptide. Cystine bridges form between C48–C60, C52–C69, and C59–C73.

Belongs to the conotoxin O3 superfamily. As to expression, expressed by the venom duct.

The protein resides in the secreted. The polypeptide is Conotoxin VnMSGL-0111 (Conus ventricosus (Mediterranean cone)).